We begin with the raw amino-acid sequence, 262 residues long: Hydroxyethylthiazole kinase (262 aa).

M39 is a binding site for substrate. The ATP site is built by K115 and T160. Residue G187 participates in substrate binding.

Belongs to the Thz kinase family. It depends on Mg(2+) as a cofactor.

It carries out the reaction 5-(2-hydroxyethyl)-4-methylthiazole + ATP = 4-methyl-5-(2-phosphooxyethyl)-thiazole + ADP + H(+). It functions in the pathway cofactor biosynthesis; thiamine diphosphate biosynthesis; 4-methyl-5-(2-phosphoethyl)-thiazole from 5-(2-hydroxyethyl)-4-methylthiazole: step 1/1. Its function is as follows. Catalyzes the phosphorylation of the hydroxyl group of 4-methyl-5-beta-hydroxyethylthiazole (THZ). The polypeptide is Hydroxyethylthiazole kinase (Staphylococcus epidermidis (strain ATCC 35984 / DSM 28319 / BCRC 17069 / CCUG 31568 / BM 3577 / RP62A)).